The sequence spans 259 residues: Peroxiredoxin-4 (259 aa).

In terms of domain architecture, Thioredoxin spans 66–224 (IRIRKPAPAF…AIRTLKALKF (159 aa)). Residue C111 is the Cysteine sulfenic acid (-SOH) intermediate of the active site.

Belongs to the peroxiredoxin family. AhpC/Prx1 subfamily. In terms of assembly, homodimer; disulfide-linked, upon oxidation. 5 homodimers assemble to form a ring-like decamer.

Its subcellular location is the cytoplasm. The protein resides in the endoplasmic reticulum. The catalysed reaction is a hydroperoxide + [thioredoxin]-dithiol = an alcohol + [thioredoxin]-disulfide + H2O. In terms of biological role, thiol-specific peroxidase that catalyzes the reduction of hydrogen peroxide and organic hydroperoxides to water and alcohols, respectively. Plays a role in cell protection against oxidative stress by detoxifying peroxides and as sensor of hydrogen peroxide-mediated signaling events. Regulates the activation of NF-kappa-B in the cytosol by a modulation of I-kappa-B-alpha phosphorylation. The sequence is that of Peroxiredoxin-4 (prdx4) from Dictyostelium discoideum (Social amoeba).